Reading from the N-terminus, the 198-residue chain is Superoxide dismutase [Mn], mitochondrial (198 aa).

H26 is a binding site for Mn(2+). At Y34 the chain carries 3'-nitrotyrosine. N6-acetyllysine; alternate is present on residues K44 and K51. Residues K44 and K51 each carry the N6-succinyllysine; alternate modification. H74 contacts Mn(2+). K90 carries the N6-acetyllysine modification. Residues K98 and K106 each carry the N6-acetyllysine; alternate modification. N6-succinyllysine; alternate occurs at positions 98 and 106. Positions 159 and 163 each coordinate Mn(2+). K178 carries the N6-acetyllysine modification.

The protein belongs to the iron/manganese superoxide dismutase family. Homotetramer. Mn(2+) serves as cofactor. Post-translationally, nitrated under oxidative stress. Nitration coupled with oxidation inhibits the catalytic activity. Acetylation at Lys-98 decreases enzymatic activity. Deacetylated by SIRT3 upon exposure to ionizing radiations or after long fasting. In terms of processing, polyubiquitinated; leading to proteasomal degradation. Deubiquitinated by USP36 which increases protein stability.

It is found in the mitochondrion matrix. The catalysed reaction is 2 superoxide + 2 H(+) = H2O2 + O2. Functionally, destroys superoxide anion radicals which are normally produced within the cells and which are toxic to biological systems. This chain is Superoxide dismutase [Mn], mitochondrial (SOD2), found in Hylobates lar (Lar gibbon).